The following is a 105-amino-acid chain: Large ribosomal subunit protein eL42z/eL42y (105 aa).

The disordered stretch occupies residues 28-57 (YKKGKDSLAAQGKRRYDRKQSGYGGQTKPV).

This sequence belongs to the eukaryotic ribosomal protein eL42 family.

This is Large ribosomal subunit protein eL42z/eL42y (RPL36AA) from Arabidopsis thaliana (Mouse-ear cress).